The primary structure comprises 846 residues: Spindle pole body component SPC98 (846 aa).

Phosphoserine occurs at positions 124 and 136.

Belongs to the TUBGCP family. As to quaternary structure, interacts with TUB4, SPC72 and SPC97.

Its subcellular location is the nucleus. The protein resides in the cytoplasm. It is found in the cytoskeleton. It localises to the microtubule organizing center. The protein localises to the spindle pole body. Involved in microtubule organization by the microtubule organizing center, the spindle pole body (SPB). Probably part of the microtubule attachment site at the SPB. The sequence is that of Spindle pole body component SPC98 (SPC98) from Saccharomyces cerevisiae (strain ATCC 204508 / S288c) (Baker's yeast).